A 205-amino-acid chain; its full sequence is Holliday junction branch migration complex subunit RuvA (205 aa).

The interval 1-64 (MIGKLKGTID…EDQLKLFGFL (64 aa)) is domain I. Positions 65-143 (SALEREWFRL…AFVGEMAPSI (79 aa)) are domain II. The interval 144 to 153 (GLKQELGEGV) is flexible linker. The interval 153–205 (VAAAPVSDAVSALTNLGYSRDQAANAVAAALKNGGEGADSARLIRLGLKELSR) is domain III.

The protein belongs to the RuvA family. As to quaternary structure, homotetramer. Forms an RuvA(8)-RuvB(12)-Holliday junction (HJ) complex. HJ DNA is sandwiched between 2 RuvA tetramers; dsDNA enters through RuvA and exits via RuvB. An RuvB hexamer assembles on each DNA strand where it exits the tetramer. Each RuvB hexamer is contacted by two RuvA subunits (via domain III) on 2 adjacent RuvB subunits; this complex drives branch migration. In the full resolvosome a probable DNA-RuvA(4)-RuvB(12)-RuvC(2) complex forms which resolves the HJ.

The protein resides in the cytoplasm. The RuvA-RuvB-RuvC complex processes Holliday junction (HJ) DNA during genetic recombination and DNA repair, while the RuvA-RuvB complex plays an important role in the rescue of blocked DNA replication forks via replication fork reversal (RFR). RuvA specifically binds to HJ cruciform DNA, conferring on it an open structure. The RuvB hexamer acts as an ATP-dependent pump, pulling dsDNA into and through the RuvAB complex. HJ branch migration allows RuvC to scan DNA until it finds its consensus sequence, where it cleaves and resolves the cruciform DNA. The protein is Holliday junction branch migration complex subunit RuvA of Sinorhizobium medicae (strain WSM419) (Ensifer medicae).